We begin with the raw amino-acid sequence, 62 residues long: UPF0434 protein ASA_1553 (62 aa).

This sequence belongs to the UPF0434 family.

This is UPF0434 protein ASA_1553 from Aeromonas salmonicida (strain A449).